Here is a 179-residue protein sequence, read N- to C-terminus: ATP synthase subunit delta (179 aa).

Belongs to the ATPase delta chain family. F-type ATPases have 2 components, F(1) - the catalytic core - and F(0) - the membrane proton channel. F(1) has five subunits: alpha(3), beta(3), gamma(1), delta(1), epsilon(1). F(0) has three main subunits: a(1), b(2) and c(10-14). The alpha and beta chains form an alternating ring which encloses part of the gamma chain. F(1) is attached to F(0) by a central stalk formed by the gamma and epsilon chains, while a peripheral stalk is formed by the delta and b chains.

Its subcellular location is the cell inner membrane. F(1)F(0) ATP synthase produces ATP from ADP in the presence of a proton or sodium gradient. F-type ATPases consist of two structural domains, F(1) containing the extramembraneous catalytic core and F(0) containing the membrane proton channel, linked together by a central stalk and a peripheral stalk. During catalysis, ATP synthesis in the catalytic domain of F(1) is coupled via a rotary mechanism of the central stalk subunits to proton translocation. In terms of biological role, this protein is part of the stalk that links CF(0) to CF(1). It either transmits conformational changes from CF(0) to CF(1) or is implicated in proton conduction. The sequence is that of ATP synthase subunit delta from Thermosipho melanesiensis (strain DSM 12029 / CIP 104789 / BI429).